A 179-amino-acid chain; its full sequence is Replication restart protein DnaT (179 aa).

Residues 156–179 (GGLPKRDVNTVSEPDSQIPPGFRG) are disordered.

Belongs to the DnaT family. Homooligomerizes. Interacts with PriB. Component of the replication restart primosome. Primosome assembly occurs via a 'hand-off' mechanism. PriA binds to replication forks, subsequently PriB then DnaT bind; DnaT then displaces ssDNA to generate the helicase loading substrate.

In terms of biological role, involved in the restart of stalled replication forks, which reloads the replicative helicase on sites other than the origin of replication. Can function in multiple replication restart pathways. Displaces ssDNA from a PriB-ssDNA complex. Probably forms a spiral filament on ssDNA. The polypeptide is Replication restart protein DnaT (Escherichia coli (strain ATCC 8739 / DSM 1576 / NBRC 3972 / NCIMB 8545 / WDCM 00012 / Crooks)).